The chain runs to 138 residues: ATP synthase epsilon chain (138 aa).

It belongs to the ATPase epsilon chain family. F-type ATPases have 2 components, CF(1) - the catalytic core - and CF(0) - the membrane proton channel. CF(1) has five subunits: alpha(3), beta(3), gamma(1), delta(1), epsilon(1). CF(0) has three main subunits: a, b and c.

Its subcellular location is the cell inner membrane. Functionally, produces ATP from ADP in the presence of a proton gradient across the membrane. The chain is ATP synthase epsilon chain from Delftia acidovorans (strain DSM 14801 / SPH-1).